Reading from the N-terminus, the 501-residue chain is Cryptochrome-1 (501 aa).

Residues 5-134 form the Photolyase/cryptochrome alpha/beta domain; it reads KKTIVWFRRD…SVQSYNGDLC (130 aa). Residues Tyr231 and 243-247 each bind FAD; that span reads TSLLS. Arg356 serves as a coordination point for ATP. 2 residues coordinate FAD: Asp386 and Asp388. An ATP-binding site is contributed by Asp405.

The protein belongs to the DNA photolyase class-1 family. In terms of assembly, homodimer. FAD is required as a cofactor. The cofactor is (6R)-5,10-methylene-5,6,7,8-tetrahydrofolate.

Its function is as follows. Mediates blue light-induced gene expression in addition to its role in blue light-dependent inhibition of stem growth. The sequence is that of Cryptochrome-1 (PHR1) from Sinapis alba (White mustard).